Here is a 527-residue protein sequence, read N- to C-terminus: Anthranilate synthase component 1 1 (527 aa).

Residue Ser52 participates in L-tryptophan binding. The disordered stretch occupies residues Ala53–Glu72. Position 298 to 300 (Pro298 to Met300) interacts with L-tryptophan. Gly333 to Thr334 lines the chorismate pocket. Glu360 is a Mg(2+) binding site. Chorismate contacts are provided by residues Tyr448, Arg468, Gly486 to Gly488, and Gly488. Residue Glu501 participates in Mg(2+) binding.

It belongs to the anthranilate synthase component I family. In terms of assembly, tetramer of two components I and two components II. Requires Mg(2+) as cofactor.

It carries out the reaction chorismate + L-glutamine = anthranilate + pyruvate + L-glutamate + H(+). The protein operates within amino-acid biosynthesis; L-tryptophan biosynthesis; L-tryptophan from chorismate: step 1/5. This is Anthranilate synthase component 1 1 (trpE1) from Halobacterium salinarum (strain ATCC 700922 / JCM 11081 / NRC-1) (Halobacterium halobium).